The primary structure comprises 232 residues: RNA chaperone ProQ (232 aa).

A disordered region spans residues 105-182; sequence EAKARVQAQR…REEQHTPVSD (78 aa). Basic and acidic residues-rich tracts occupy residues 117-138 and 147-177; these read QQAK…PPRE and RRKE…EEQH.

It belongs to the ProQ family.

The protein resides in the cytoplasm. RNA chaperone with significant RNA binding, RNA strand exchange and RNA duplexing activities. May regulate ProP activity through an RNA-based, post-transcriptional mechanism. The chain is RNA chaperone ProQ from Escherichia coli O139:H28 (strain E24377A / ETEC).